The chain runs to 221 residues: 7-cyano-7-deazaguanine synthase (221 aa).

7–17 (LSGGLDSAVSL) is a binding site for ATP. Zn(2+)-binding residues include cysteine 192, cysteine 200, cysteine 203, and cysteine 206.

It belongs to the QueC family. Homodimer. The cofactor is Zn(2+).

It carries out the reaction 7-carboxy-7-deazaguanine + NH4(+) + ATP = 7-cyano-7-deazaguanine + ADP + phosphate + H2O + H(+). The protein operates within purine metabolism; 7-cyano-7-deazaguanine biosynthesis. Functionally, catalyzes the ATP-dependent conversion of 7-carboxy-7-deazaguanine (CDG) to 7-cyano-7-deazaguanine (preQ(0)). This is 7-cyano-7-deazaguanine synthase from Pelotomaculum thermopropionicum (strain DSM 13744 / JCM 10971 / SI).